The primary structure comprises 149 residues: Arginine repressor (149 aa).

It belongs to the ArgR family.

Its subcellular location is the cytoplasm. The protein operates within amino-acid biosynthesis; L-arginine biosynthesis [regulation]. In terms of biological role, regulates arginine biosynthesis genes. In Listeria welshimeri serovar 6b (strain ATCC 35897 / DSM 20650 / CCUG 15529 / CIP 8149 / NCTC 11857 / SLCC 5334 / V8), this protein is Arginine repressor.